A 313-amino-acid chain; its full sequence is Fructose-1,6-bisphosphatase class 1 (313 aa).

Residues Glu90, Asp111, Leu113, and Asp114 each contribute to the Mg(2+) site. Substrate contacts are provided by residues 114–117, Tyr222, and Lys253; that span reads DGSS. Glu259 contributes to the Mg(2+) binding site.

This sequence belongs to the FBPase class 1 family. Homotetramer. Requires Mg(2+) as cofactor.

It localises to the cytoplasm. It catalyses the reaction beta-D-fructose 1,6-bisphosphate + H2O = beta-D-fructose 6-phosphate + phosphate. It functions in the pathway carbohydrate biosynthesis; gluconeogenesis. The polypeptide is Fructose-1,6-bisphosphatase class 1 (Geotalea uraniireducens (strain Rf4) (Geobacter uraniireducens)).